Reading from the N-terminus, the 1045-residue chain is Mitotic deacetylase-associated SANT domain protein (1045 aa).

Met-1 is modified (N-acetylmethionine). 2 disordered regions span residues 1-68 and 99-159; these read MNLQ…PPPS and NSVM…PTYY. The span at 132 to 146 shows a compositional bias: polar residues; sequence STWNCHSLSLYSATK. A Glycyl lysine isopeptide (Lys-Gly) (interchain with G-Cter in SUMO2) cross-link involves residue Lys-166. Asymmetric dimethylarginine is present on Arg-193. Disordered regions lie at residues 228-264, 276-305, 330-349, 378-397, and 410-441; these read QVFR…QQAA, SMPQ…AHHS, APQP…SRRL, HHWP…HPEA, and LPDG…STGD. Residues 240 to 264 show a composition bias toward low complexity; that stretch reads VAAFPPQKQQQQQQPQQQQQQQQAA. Basic and acidic residues predominate over residues 412–425; that stretch reads DGERLAPNGREREA. Residue Arg-447 is modified to Omega-N-methylarginine. Ser-461 is modified (phosphoserine). The interval 543-563 is disordered; that stretch reads QAGGLDEDGKGPEQNPAEHKP. Positions 549 to 563 are enriched in basic and acidic residues; it reads EDGKGPEQNPAEHKP. A Glycyl lysine isopeptide (Lys-Gly) (interchain with G-Cter in SUMO1); alternate cross-link involves residue Lys-590. Residue Lys-590 forms a Glycyl lysine isopeptide (Lys-Gly) (interchain with G-Cter in SUMO2); alternate linkage. Thr-655 carries the phosphothreonine modification. At Ser-661 the chain carries Phosphoserine. Thr-704 carries the phosphothreonine modification. Ser-709 carries the phosphoserine modification. The residue at position 715 (Thr-715) is a Phosphothreonine. In terms of domain architecture, ELM2 spans 721–813; it reads PRINVGSRFQ…ETLNKLLLKK (93 aa). Residues 828 to 879 form the SANT domain; it reads TGSDQWKMAERKLFNKGIAIYKKDFFLVQKLIQTKTVAQCVEFYYTYKKQVK. Residues 887 to 1045 form a disordered region; that stretch reads TFGDVDTSDE…NTFPCKKCGR (159 aa). 2 stretches are compositionally biased toward basic and acidic residues: residues 894-909 and 919-942; these read SDEK…DIKT and PRRE…RKEG. At Ser-923 the chain carries Phosphoserine. Residues 943-957 are compositionally biased toward acidic residues; it reads EEEVPEIQEKEEQEE. Residues 970–980 show a composition bias toward polar residues; it reads ATQTLQANESA.

Interacts with DNTTIP1. Identified in a histone deacetylase complex that contains DNTTIP1, HDAC1 and MIDEAS; this complex assembles into a tetramer that contains four copies of each protein chain.

Its subcellular location is the nucleus. The polypeptide is Mitotic deacetylase-associated SANT domain protein (Homo sapiens (Human)).